Reading from the N-terminus, the 529-residue chain is UPF0159 protein TC_0921 (529 aa).

2 ThyX domains span residues 38–274 and 309–511; these read KGAL…AEPH and KGVK…LKFV.

The protein belongs to the UPF0159 family.

The protein is UPF0159 protein TC_0921 of Chlamydia muridarum (strain MoPn / Nigg).